The primary structure comprises 244 residues: 1-(5-phosphoribosyl)-5-[(5-phosphoribosylamino)methylideneamino] imidazole-4-carboxamide isomerase (244 aa).

Asp7 (proton acceptor) is an active-site residue. Residue Asp129 is the Proton donor of the active site.

Belongs to the HisA/HisF family.

Its subcellular location is the cytoplasm. The enzyme catalyses 1-(5-phospho-beta-D-ribosyl)-5-[(5-phospho-beta-D-ribosylamino)methylideneamino]imidazole-4-carboxamide = 5-[(5-phospho-1-deoxy-D-ribulos-1-ylimino)methylamino]-1-(5-phospho-beta-D-ribosyl)imidazole-4-carboxamide. Its pathway is amino-acid biosynthesis; L-histidine biosynthesis; L-histidine from 5-phospho-alpha-D-ribose 1-diphosphate: step 4/9. The sequence is that of 1-(5-phosphoribosyl)-5-[(5-phosphoribosylamino)methylideneamino] imidazole-4-carboxamide isomerase from Pseudoalteromonas atlantica (strain T6c / ATCC BAA-1087).